A 627-amino-acid chain; its full sequence is CTP synthase (627 aa).

A Glutamine amidotransferase type-1 domain is found at 300–554 (CIAVVGKYTK…LASVDRLNQY (255 aa)). Catalysis depends on for GATase activity residues Cys399, His526, and Glu528. Ser567, Ser570, Ser571, and Ser588 each carry phosphoserine. Phosphothreonine is present on Thr595. Residues 599-613 (GISKSCNGSISTSDS) show a composition bias toward polar residues. The tract at residues 599-627 (GISKSCNGSISTSDSEGACGGVDPTNGHK) is disordered.

It belongs to the CTP synthase family. In ovary, expressed in oocytes, follicle cells and nurse cells. Also expressed in larval and adult testis (at protein level). In larvae, expressed in lymph gland, salivary gland, regions of the midgut, testis, optical lobe and trachea. Isoform 1 is expressed in adult testis, ovary, accessory gland and head. Isoform 2 is weakly expressed in ovary.

The protein localises to the cytoplasm. It catalyses the reaction UTP + L-glutamine + ATP + H2O = CTP + L-glutamate + ADP + phosphate + 2 H(+). It functions in the pathway pyrimidine metabolism; CTP biosynthesis via de novo pathway; CTP from UDP: step 2/2. In terms of biological role, catalyzes the ATP-dependent amination of UTP to CTP with either L-glutamine or ammonia as the source of nitrogen. Constitutes the rate-limiting enzyme in the synthesis of cytosine nucleotides. Functionally, required for assembly of cytoophidium in female germline cells. In nurse cells, CTPsyn filament assembly in the cytoophidium is regulated by Ack kinase which may thereby contribute to the control of CTP production at specific stages of oogenesis and development of the nurse cell membrane. The polypeptide is CTP synthase (Drosophila melanogaster (Fruit fly)).